The primary structure comprises 231 residues: Septum site-determining protein MinC (231 aa).

Belongs to the MinC family. Interacts with MinD and FtsZ.

In terms of biological role, cell division inhibitor that blocks the formation of polar Z ring septums. Rapidly oscillates between the poles of the cell to destabilize FtsZ filaments that have formed before they mature into polar Z rings. Prevents FtsZ polymerization. The chain is Septum site-determining protein MinC from Shigella flexneri.